The primary structure comprises 205 residues: Thiamine-phosphate synthase (205 aa).

4-amino-2-methyl-5-(diphosphooxymethyl)pyrimidine is bound by residues glutamine 35–lysine 39 and asparagine 67. Residues aspartate 68 and aspartate 86 each coordinate Mg(2+). Threonine 105 provides a ligand contact to 4-amino-2-methyl-5-(diphosphooxymethyl)pyrimidine. Serine 132 to threonine 134 contacts 2-[(2R,5Z)-2-carboxy-4-methylthiazol-5(2H)-ylidene]ethyl phosphate. Lysine 135 is a 4-amino-2-methyl-5-(diphosphooxymethyl)pyrimidine binding site. Glycine 162 provides a ligand contact to 2-[(2R,5Z)-2-carboxy-4-methylthiazol-5(2H)-ylidene]ethyl phosphate.

It belongs to the thiamine-phosphate synthase family. Mg(2+) serves as cofactor.

The catalysed reaction is 2-[(2R,5Z)-2-carboxy-4-methylthiazol-5(2H)-ylidene]ethyl phosphate + 4-amino-2-methyl-5-(diphosphooxymethyl)pyrimidine + 2 H(+) = thiamine phosphate + CO2 + diphosphate. The enzyme catalyses 2-(2-carboxy-4-methylthiazol-5-yl)ethyl phosphate + 4-amino-2-methyl-5-(diphosphooxymethyl)pyrimidine + 2 H(+) = thiamine phosphate + CO2 + diphosphate. It catalyses the reaction 4-methyl-5-(2-phosphooxyethyl)-thiazole + 4-amino-2-methyl-5-(diphosphooxymethyl)pyrimidine + H(+) = thiamine phosphate + diphosphate. The protein operates within cofactor biosynthesis; thiamine diphosphate biosynthesis; thiamine phosphate from 4-amino-2-methyl-5-diphosphomethylpyrimidine and 4-methyl-5-(2-phosphoethyl)-thiazole: step 1/1. Its function is as follows. Condenses 4-methyl-5-(beta-hydroxyethyl)thiazole monophosphate (THZ-P) and 2-methyl-4-amino-5-hydroxymethyl pyrimidine pyrophosphate (HMP-PP) to form thiamine monophosphate (TMP). This is Thiamine-phosphate synthase from Pseudomonas syringae pv. syringae (strain B728a).